The primary structure comprises 336 residues: Protein REVEILLE 7-like (336 aa).

The 55-residue stretch at 60–114 (TVTKQREKWSEEEHDRFLEAIKLYGRGWRQIQEHIGTKTAVQIRSHAQKFFSKMA) folds into the HTH myb-type domain. The H-T-H motif DNA-binding region spans 87–110 (WRQIQEHIGTKTAVQIRSHAQKFF). Residues 114 to 197 (AQEADSRSEG…KQPFKDDSDI (84 aa)) form a disordered region. The segment covering 134–144 (RPKRKPAHPYP) has biased composition (basic residues). Over residues 145–158 (RKSPVPYTQSPPPN) the composition is skewed to pro residues. Residues 167 to 189 (KSPTSVLSSFGSEDQNNYTTSKQ) show a composition bias toward polar residues.

It is found in the nucleus. Probable transcription factor. This is Protein REVEILLE 7-like (RVE7L) from Arabidopsis thaliana (Mouse-ear cress).